The chain runs to 467 residues: UTP--glucose-1-phosphate uridylyltransferase (467 aa).

UTP contacts are provided by residues 83–86 (LNGG), lysine 97, glutamine 160, and glycine 189. 85–86 (GG) contacts substrate. Residues histidine 190 and 218–220 (NSD) each bind substrate. 2 residues coordinate UTP: aspartate 220 and lysine 358.

It belongs to the UDPGP type 1 family.

It is found in the cytoplasm. It carries out the reaction alpha-D-glucose 1-phosphate + UTP + H(+) = UDP-alpha-D-glucose + diphosphate. Its function is as follows. Plays a central role as a glucosyl donor in cellular metabolic pathways. This Musa acuminata (Banana) protein is UTP--glucose-1-phosphate uridylyltransferase (UGPA).